The following is a 232-amino-acid chain: Small ribosomal subunit protein uS3 (232 aa).

The 69-residue stretch at Val-39 to Arg-107 folds into the KH type-2 domain. Positions Ala-213 to Lys-232 are disordered.

This sequence belongs to the universal ribosomal protein uS3 family. Part of the 30S ribosomal subunit. Forms a tight complex with proteins S10 and S14.

Binds the lower part of the 30S subunit head. Binds mRNA in the 70S ribosome, positioning it for translation. The sequence is that of Small ribosomal subunit protein uS3 from Vibrio campbellii (strain ATCC BAA-1116).